The sequence spans 260 residues: MDNFELRLNSGKLIDNDSKVHEIGVIAMGSYLENHGSALPIDTDIKIASYVALNVALTTGAKFLGTVCTATEYDYIKHGIHNSLEDILEELEEIIIKYSKIGVNKFLIINCHGGNSDVSKKIEQLQEKIRNNFKEYGTTEKELEYIKKIKYNFKEYGNTEKINIKIKSFGYIHAYSEELSIGKCIGIYDETKFNKHTPENYGEIGMVGLPEARLNNKYIDKEAKMVESIPAVVNEQYGEELIKKMVNESIEYIREFLMLK.

The Fe cation site is built by Glu-33, His-35, Asp-44, and His-112.

It belongs to the creatininase superfamily. FAPy deformylase family. As to quaternary structure, homodimer. Requires Fe(2+) as cofactor. It depends on Zn(2+) as a cofactor.

It catalyses the reaction 2-amino-5-formylamino-6-(5-phospho-D-ribosylamino)pyrimidin-4(3H)-one + H2O = 2,5-diamino-6-(1-D-ribosylamino)pyrimidin-4(3H)-one 5'-phosphate + formate + H(+). It functions in the pathway cofactor biosynthesis; coenzyme F420 biosynthesis. The protein operates within cofactor biosynthesis; riboflavin biosynthesis. Catalyzes the hydrolysis of the formamide of 2-amino-5-formylamino-6-ribosylamino-4(3H)-pyrimidinone 5'-monophosphate (FAPy) to form 2,5-diamino-6-ribosylamino-4(3H)-pyrimidinone 5'-phosphate (APy). In Methanococcus voltae (strain ATCC BAA-1334 / A3), this protein is 2-amino-5-formylamino-6-ribosylaminopyrimidin-4(3H)-one 5'-monophosphate deformylase.